Consider the following 122-residue polypeptide: Large ribosomal subunit protein uL14 (122 aa).

This sequence belongs to the universal ribosomal protein uL14 family. As to quaternary structure, part of the 50S ribosomal subunit. Forms a cluster with proteins L3 and L19. In the 70S ribosome, L14 and L19 interact and together make contacts with the 16S rRNA in bridges B5 and B8.

Binds to 23S rRNA. Forms part of two intersubunit bridges in the 70S ribosome. The chain is Large ribosomal subunit protein uL14 from Sulfurovum sp. (strain NBC37-1).